A 248-amino-acid chain; its full sequence is Segregation and condensation protein A (248 aa).

It belongs to the ScpA family. In terms of assembly, component of a cohesin-like complex composed of ScpA, ScpB and the Smc homodimer, in which ScpA and ScpB bind to the head domain of Smc. The presence of the three proteins is required for the association of the complex with DNA.

The protein localises to the cytoplasm. In terms of biological role, participates in chromosomal partition during cell division. May act via the formation of a condensin-like complex containing Smc and ScpB that pull DNA away from mid-cell into both cell halves. The protein is Segregation and condensation protein A of Clostridium perfringens (strain ATCC 13124 / DSM 756 / JCM 1290 / NCIMB 6125 / NCTC 8237 / Type A).